Consider the following 397-residue polypeptide: Succinate--CoA ligase [ADP-forming] subunit beta (397 aa).

The ATP-grasp domain occupies 9–254 (KALLRSYGAP…ETEEDPKELA (246 aa)). Residues Lys46, 53–55 (GRG), Glu109, Ser112, and Glu117 contribute to the ATP site. Mg(2+) is bound by residues Asn209 and Asp223. Residues Asn274 and 331-333 (GIM) each bind substrate.

The protein belongs to the succinate/malate CoA ligase beta subunit family. Heterotetramer of two alpha and two beta subunits. Mg(2+) serves as cofactor.

The catalysed reaction is succinate + ATP + CoA = succinyl-CoA + ADP + phosphate. It catalyses the reaction GTP + succinate + CoA = succinyl-CoA + GDP + phosphate. It functions in the pathway carbohydrate metabolism; tricarboxylic acid cycle; succinate from succinyl-CoA (ligase route): step 1/1. Its function is as follows. Succinyl-CoA synthetase functions in the citric acid cycle (TCA), coupling the hydrolysis of succinyl-CoA to the synthesis of either ATP or GTP and thus represents the only step of substrate-level phosphorylation in the TCA. The beta subunit provides nucleotide specificity of the enzyme and binds the substrate succinate, while the binding sites for coenzyme A and phosphate are found in the alpha subunit. This Cereibacter sphaeroides (strain ATCC 17029 / ATH 2.4.9) (Rhodobacter sphaeroides) protein is Succinate--CoA ligase [ADP-forming] subunit beta.